We begin with the raw amino-acid sequence, 225 residues long: NAD(P)H-quinone oxidoreductase subunit K, chloroplastic (225 aa).

[4Fe-4S] cluster contacts are provided by Cys43, Cys44, Cys108, and Cys139.

It belongs to the complex I 20 kDa subunit family. As to quaternary structure, NDH is composed of at least 16 different subunits, 5 of which are encoded in the nucleus. [4Fe-4S] cluster serves as cofactor.

The protein resides in the plastid. The protein localises to the chloroplast thylakoid membrane. It catalyses the reaction a plastoquinone + NADH + (n+1) H(+)(in) = a plastoquinol + NAD(+) + n H(+)(out). It carries out the reaction a plastoquinone + NADPH + (n+1) H(+)(in) = a plastoquinol + NADP(+) + n H(+)(out). In terms of biological role, NDH shuttles electrons from NAD(P)H:plastoquinone, via FMN and iron-sulfur (Fe-S) centers, to quinones in the photosynthetic chain and possibly in a chloroplast respiratory chain. The immediate electron acceptor for the enzyme in this species is believed to be plastoquinone. Couples the redox reaction to proton translocation, and thus conserves the redox energy in a proton gradient. The polypeptide is NAD(P)H-quinone oxidoreductase subunit K, chloroplastic (Lemna minor (Common duckweed)).